A 353-amino-acid chain; its full sequence is UPF0283 membrane protein YcjF (353 aa).

Positions 1 to 19 (MSEPLKPRIDFAEPLKEEP) are enriched in basic and acidic residues. A disordered region spans residues 1–35 (MSEPLKPRIDFAEPLKEEPTSAFKAQQTFSEAESR). 3 helical membrane passes run 70-90 (MVMGGLALFGASVVGQGVQWT), 100-120 (VALGGCAAGALIIGAGVGSVV), and 213-233 (ESTLMIAVSSLALVDMAFIAW).

The protein belongs to the UPF0283 family.

Its subcellular location is the cell inner membrane. This chain is UPF0283 membrane protein YcjF, found in Salmonella gallinarum (strain 287/91 / NCTC 13346).